We begin with the raw amino-acid sequence, 364 residues long: Histidinol-phosphate aminotransferase BQ2027_MB2256C (364 aa).

An N6-(pyridoxal phosphate)lysine modification is found at Lys220.

It belongs to the class-I pyridoxal-phosphate-dependent aminotransferase family. As to quaternary structure, monomer. Requires pyridoxal 5'-phosphate as cofactor.

The protein resides in the secreted. It is found in the cell wall. It catalyses the reaction L-histidinol phosphate + 2-oxoglutarate = 3-(imidazol-4-yl)-2-oxopropyl phosphate + L-glutamate. Aminotransferase that catalyzes the conversion of histidinol phosphate and 2-oxoglutarate into L-glutamate and imidazole acetol phosphate. Might play a significant role in mediating histidine biosynthesis during infection. Facilitates mycobacterial survival and virulence in macrophages. The polypeptide is Histidinol-phosphate aminotransferase BQ2027_MB2256C (Mycobacterium bovis (strain ATCC BAA-935 / AF2122/97)).